The chain runs to 563 residues: Efflux pump FUS6 (563 aa).

The segment at M1–E30 is disordered. 5 helical membrane passes run W39–I59, L75–A95, S105–H125, G138–I158, and I167–A187. N-linked (GlcNAc...) asparagine glycosylation occurs at N189. A run of 3 helical transmembrane segments spans residues W194–L214, W233–G253, and G261–Y281. A glycan (N-linked (GlcNAc...) asparagine) is linked at N299. 6 consecutive transmembrane segments (helical) span residues L305–V325, V340–I360, V368–D388, I401–S421, A433–F453, and K509–V529. N-linked (GlcNAc...) asparagine glycosylation occurs at N553.

It belongs to the major facilitator superfamily. TCR/Tet family.

The protein localises to the membrane. Functionally, efflux pump; part of the gene cluster that mediates the biosynthesis of the mycotoxin fusarin C. Within the cluster, FUS1, FUS2, FUS8 and FUS9 are sufficient for fusarin production. The other FUS cluster members are not essential for fusarin C biosynthesis. This Gibberella moniliformis (strain M3125 / FGSC 7600) (Maize ear and stalk rot fungus) protein is Efflux pump FUS6.